A 304-amino-acid chain; its full sequence is 2-phospho-L-lactate transferase (304 aa).

D49 provides a ligand contact to 7,8-didemethyl-8-hydroxy-5-deazariboflavin.

It belongs to the CofD family. Homodimer. Requires Mg(2+) as cofactor.

The catalysed reaction is (2S)-lactyl-2-diphospho-5'-guanosine + 7,8-didemethyl-8-hydroxy-5-deazariboflavin = oxidized coenzyme F420-0 + GMP + H(+). The protein operates within cofactor biosynthesis; coenzyme F420 biosynthesis. Functionally, catalyzes the transfer of the 2-phospholactate moiety from (2S)-lactyl-2-diphospho-5'-guanosine to 7,8-didemethyl-8-hydroxy-5-deazariboflavin (FO) with the formation of oxidized coenzyme F420-0 and GMP. The polypeptide is 2-phospho-L-lactate transferase (Methanocorpusculum labreanum (strain ATCC 43576 / DSM 4855 / Z)).